We begin with the raw amino-acid sequence, 290 residues long: Zinc finger protein-like 1 homolog (290 aa).

Residues 1 to 43 form a B box-type; degenerate zinc finger; the sequence is MGLCKCPKRQVTTQFCFEHRVNVCENCMVVNHTKCTVQSYIQW. An RING-type; atypical zinc finger spans residues 53–101; sequence CPLCGSPLDNEDCVRLICYHVFHWKCLNAKQQSLPANTAPGGHTCPTCS. Positions 156 to 168 are enriched in polar residues; it reads NGNTFASSMSQTR. The tract at residues 156–175 is disordered; sequence NGNTFASSMSQTRSNERPES. Residues 249–269 traverse the membrane as a helical segment; the sequence is WFLVLGGCIGFVCIIYVLATL.

This sequence belongs to the ZFPL1 family.

It is found in the membrane. The protein is Zinc finger protein-like 1 homolog of Aedes aegypti (Yellowfever mosquito).